We begin with the raw amino-acid sequence, 251 residues long: Triosephosphate isomerase (251 aa).

Position 9 to 11 (9 to 11 (NWK)) interacts with substrate. Residue His-95 is the Electrophile of the active site. Glu-167 (proton acceptor) is an active-site residue. Substrate is bound by residues Gly-173, Ser-213, and 234 to 235 (GG).

Belongs to the triosephosphate isomerase family. Homodimer.

It is found in the cytoplasm. It catalyses the reaction D-glyceraldehyde 3-phosphate = dihydroxyacetone phosphate. Its pathway is carbohydrate biosynthesis; gluconeogenesis. The protein operates within carbohydrate degradation; glycolysis; D-glyceraldehyde 3-phosphate from glycerone phosphate: step 1/1. Its function is as follows. Involved in the gluconeogenesis. Catalyzes stereospecifically the conversion of dihydroxyacetone phosphate (DHAP) to D-glyceraldehyde-3-phosphate (G3P). The chain is Triosephosphate isomerase from Geotalea uraniireducens (strain Rf4) (Geobacter uraniireducens).